The primary structure comprises 62 residues: UPF0337 protein XCC0070 (62 aa).

Residues 32–62 form a disordered region; sequence LEGAAEKNIGKVQRKAGELADDVRDATKSTR.

This sequence belongs to the UPF0337 (CsbD) family.

The polypeptide is UPF0337 protein XCC0070 (Xanthomonas campestris pv. campestris (strain ATCC 33913 / DSM 3586 / NCPPB 528 / LMG 568 / P 25)).